The chain runs to 189 residues: Xanthine phosphoribosyltransferase (189 aa).

The xanthine site is built by Leu20 and Asn27. 127–131 contacts 5-phospho-alpha-D-ribose 1-diphosphate; the sequence is AYGNA. Lys155 contacts xanthine.

This sequence belongs to the purine/pyrimidine phosphoribosyltransferase family. Xpt subfamily. Homodimer.

It is found in the cytoplasm. It catalyses the reaction XMP + diphosphate = xanthine + 5-phospho-alpha-D-ribose 1-diphosphate. It participates in purine metabolism; XMP biosynthesis via salvage pathway; XMP from xanthine: step 1/1. Converts the preformed base xanthine, a product of nucleic acid breakdown, to xanthosine 5'-monophosphate (XMP), so it can be reused for RNA or DNA synthesis. This chain is Xanthine phosphoribosyltransferase, found in Bacteroides fragilis (strain ATCC 25285 / DSM 2151 / CCUG 4856 / JCM 11019 / LMG 10263 / NCTC 9343 / Onslow / VPI 2553 / EN-2).